The following is a 41-amino-acid chain: Large ribosomal subunit protein bL36B (41 aa).

The protein belongs to the bacterial ribosomal protein bL36 family.

The protein is Large ribosomal subunit protein bL36B of Haemophilus ducreyi (strain 35000HP / ATCC 700724).